The sequence spans 1083 residues: Glutamate receptor-interacting protein 2 (1083 aa).

PDZ domains lie at 58-141 (IVEL…EYEL), 156-244 (TIEI…EYDV), and 258-342 (LVEI…LPAH). Over residues 408 to 422 (AGTPGFSSQNSNTLP) the composition is skewed to polar residues. The tract at residues 408-460 (AGTPGFSSQNSNTLPRTVHPMSPRTTMNRRRQKRKDHKSSLSLASSTVGPGGQ) is disordered. The span at 434–444 (MNRRRQKRKDH) shows a compositional bias: basic residues. 3 consecutive PDZ domains span residues 468-555 (EIIL…EIEF), 569-652 (HVKL…RKDE), and 667-749 (TVEL…KKQT). Disordered regions lie at residues 754–783 (PQRL…LSEI), 853–872 (NEQD…GLET), and 936–965 (GSHH…VHNA). Positions 774-783 (SQKTSKLSEI) are enriched in polar residues. Residues 945-963 (PKKENKLSQDARSKKEEVH) show a composition bias toward basic and acidic residues. One can recognise a PDZ 7 domain in the interval 974-1056 (KVTVQKDMDT…RLDLVISRGL (83 aa)).

Belongs to the GRIP2 family. As to expression, enriched in the mitochondrial cloud of stage I oocytes, before becoming concentrated at the tip of the vegetal cortex in stage II oocytes. Expression becomes localized to the germ plasm of stage III-IV oocytes and early cleavage stages. At the tailbud stage, localizes to the migrating primordial germ cells (PGCs) until PGC migration is complete (stage 40), at which point expression disappears. In the adult, expressed in the brain, ovary, eye, muscle, spinal cord and very weakly in adipocytes.

The protein resides in the cytoplasm. In terms of biological role, plays an important role in primordial germ cell (PGC) maintenance and efficiency of PGC migration. The protein is Glutamate receptor-interacting protein 2 of Xenopus laevis (African clawed frog).